The chain runs to 162 residues: Phosphopantetheine adenylyltransferase (162 aa).

Ser11 lines the substrate pocket. Residues 11 to 12 and His19 contribute to the ATP site; that span reads SF. Lys43, Val76, and Arg90 together coordinate substrate. Residues 91 to 93, Glu101, and 126 to 132 each bind ATP; these read GLR and HLYISSS.

It belongs to the bacterial CoaD family. In terms of assembly, homohexamer. Mg(2+) is required as a cofactor.

Its subcellular location is the cytoplasm. It carries out the reaction (R)-4'-phosphopantetheine + ATP + H(+) = 3'-dephospho-CoA + diphosphate. The protein operates within cofactor biosynthesis; coenzyme A biosynthesis; CoA from (R)-pantothenate: step 4/5. In terms of biological role, reversibly transfers an adenylyl group from ATP to 4'-phosphopantetheine, yielding dephospho-CoA (dPCoA) and pyrophosphate. This chain is Phosphopantetheine adenylyltransferase, found in Streptococcus pneumoniae (strain CGSP14).